The following is a 1406-amino-acid chain: DNA-directed RNA polymerase subunit beta' (1406 aa).

4 residues coordinate Zn(2+): C70, C72, C85, and C88. The Mg(2+) site is built by D460, D462, and D464. The Zn(2+) site is built by C814, C889, C896, and C899.

Belongs to the RNA polymerase beta' chain family. The RNAP catalytic core consists of 2 alpha, 1 beta, 1 beta' and 1 omega subunit. When a sigma factor is associated with the core the holoenzyme is formed, which can initiate transcription. The cofactor is Mg(2+). Zn(2+) serves as cofactor.

It catalyses the reaction RNA(n) + a ribonucleoside 5'-triphosphate = RNA(n+1) + diphosphate. Functionally, DNA-dependent RNA polymerase catalyzes the transcription of DNA into RNA using the four ribonucleoside triphosphates as substrates. This chain is DNA-directed RNA polymerase subunit beta', found in Stenotrophomonas maltophilia (strain K279a).